Consider the following 419-residue polypeptide: Serine hydroxymethyltransferase (419 aa).

Residues leucine 121 and 125 to 127 (GHL) each bind (6S)-5,6,7,8-tetrahydrofolate. N6-(pyridoxal phosphate)lysine is present on lysine 229.

This sequence belongs to the SHMT family. As to quaternary structure, homodimer. Requires pyridoxal 5'-phosphate as cofactor.

It is found in the cytoplasm. It carries out the reaction (6R)-5,10-methylene-5,6,7,8-tetrahydrofolate + glycine + H2O = (6S)-5,6,7,8-tetrahydrofolate + L-serine. It functions in the pathway one-carbon metabolism; tetrahydrofolate interconversion. Its pathway is amino-acid biosynthesis; glycine biosynthesis; glycine from L-serine: step 1/1. In terms of biological role, catalyzes the reversible interconversion of serine and glycine with tetrahydrofolate (THF) serving as the one-carbon carrier. This reaction serves as the major source of one-carbon groups required for the biosynthesis of purines, thymidylate, methionine, and other important biomolecules. Also exhibits THF-independent aldolase activity toward beta-hydroxyamino acids, producing glycine and aldehydes, via a retro-aldol mechanism. In Streptomyces griseus subsp. griseus (strain JCM 4626 / CBS 651.72 / NBRC 13350 / KCC S-0626 / ISP 5235), this protein is Serine hydroxymethyltransferase.